A 403-amino-acid polypeptide reads, in one-letter code: Heptahelical transmembrane protein ADIPOR3 (403 aa).

The Cytoplasmic segment spans residues methionine 1–threonine 73. Residues leucine 74 to alanine 94 traverse the membrane as a helical segment. At threonine 95–proline 209 the chain is on the extracellular side. Residues phenylalanine 210–leucine 230 form a helical membrane-spanning segment. Residues serine 231–tyrosine 246 are Cytoplasmic-facing. Residues alanine 247 to cysteine 267 traverse the membrane as a helical segment. The Extracellular portion of the chain corresponds to tyrosine 268–leucine 274. Residues tyrosine 275–phenylalanine 295 form a helical membrane-spanning segment. Over glutamine 296 to cysteine 306 the chain is Cytoplasmic. Residues leucine 307–tryptophan 327 traverse the membrane as a helical segment. Residues histidine 328 to glutamate 331 lie on the Extracellular side of the membrane. Residues alanine 332–valine 352 form a helical membrane-spanning segment. The Cytoplasmic portion of the chain corresponds to tyrosine 353 to glutamine 374. A helical membrane pass occupies residues leucine 375–leucine 395. The Extracellular segment spans residues lysine 396–cysteine 403.

It belongs to the ADIPOR family.

The protein resides in the membrane. Functionally, may play a role in abiotic stress response. This is Heptahelical transmembrane protein ADIPOR3 (ADIPOR3) from Oryza sativa subsp. japonica (Rice).